We begin with the raw amino-acid sequence, 170 residues long: Urease accessory protein UreE (170 aa).

The protein belongs to the UreE family.

Its subcellular location is the cytoplasm. In terms of biological role, involved in urease metallocenter assembly. Binds nickel. Probably functions as a nickel donor during metallocenter assembly. In Helicobacter pylori (strain ATCC 700392 / 26695) (Campylobacter pylori), this protein is Urease accessory protein UreE.